A 174-amino-acid polypeptide reads, in one-letter code: Repair DNA polymerase X (174 aa).

Positions 42-51 (REEKMLNDVD) are involved in ssDNA binding. The Mg(2+) site is built by Asp-49 and Asp-51. Cys-81 and Cys-86 form a disulfide bridge. Asp-100 provides a ligand contact to Mg(2+).

This sequence belongs to the DNA polymerase type-X family. The cofactor is Mg(2+).

It is found in the virion. The catalysed reaction is DNA(n) + a 2'-deoxyribonucleoside 5'-triphosphate = DNA(n+1) + diphosphate. Functionally, error-prone polymerase lacking a proofreading 3'-5' exonuclease which catalyzes the gap-filling reaction during the DNA repair process. Specifically binds intermediates in the single-nucleotide base-excision repair process. Also catalyzes DNA polymerization with low nucleotide-insertion fidelity. Probably acts as a strategic DNA mutase, which gives rise to a rapid emergence of variants. Generates mismatched G-G pairs, in that case, the polymerase first binds the deoxynucleotide followed by mismatch formation. Together with the viral DNA ligase, fills the single nucleotide gaps generated by the AP endonuclease. Binds DNA with high affinity via the helix alphaE. The chain is Repair DNA polymerase X from Ornithodoros (relapsing fever ticks).